The following is a 199-amino-acid chain: Superoxide dismutase [Mn/Fe] (199 aa).

Histidine 27, histidine 81, aspartate 161, and histidine 165 together coordinate Fe(3+). The Mn(2+) site is built by histidine 27, histidine 81, aspartate 161, and histidine 165.

Belongs to the iron/manganese superoxide dismutase family. In terms of assembly, homodimer. Mn(2+) is required as a cofactor. The cofactor is Fe(3+).

The enzyme catalyses 2 superoxide + 2 H(+) = H2O2 + O2. Its function is as follows. Destroys superoxide anion radicals which are normally produced within the cells and which are toxic to biological systems. Catalyzes the dismutation of superoxide anion radicals into O2 and H2O2 by successive reduction and oxidation of the transition metal ion at the active site. The polypeptide is Superoxide dismutase [Mn/Fe] (sodA) (Staphylococcus epidermidis).